We begin with the raw amino-acid sequence, 371 residues long: MKDDATGADFLLSGYDYELPEDRIAQHPPVERGLSRLLVLDRTTGERIHARFADLAEHLPEGALLVANNSKVLPARLLGHRPTGGKVEFLLLTPLPLVTPLAAGPASGTVEPGWCVAEVEGLLRASKPLRPGDTLSFGDDLRVEVVHKGEFGRSMVLLFWRGELATLFAREGHLPLPPYIRRADGDEDRDRYQTVFAREDRLGSVAAPTAGLHFTPSLRETLTARGHQWAEVTLYVGYGTFSPVRCADIRDHAMHREYVEVTAETVEVIRRAKADGRPVVAVGTTSCRVLEGVATAKGTLEPYAGWTDIFMYPGYTFKVVDHLITNFHLPESSLLMLVSAFAGRERVLATYREAIEEGYRFFSYGDAMLLR.

The protein belongs to the QueA family. Monomer.

It localises to the cytoplasm. It carries out the reaction 7-aminomethyl-7-carbaguanosine(34) in tRNA + S-adenosyl-L-methionine = epoxyqueuosine(34) in tRNA + adenine + L-methionine + 2 H(+). It functions in the pathway tRNA modification; tRNA-queuosine biosynthesis. In terms of biological role, transfers and isomerizes the ribose moiety from AdoMet to the 7-aminomethyl group of 7-deazaguanine (preQ1-tRNA) to give epoxyqueuosine (oQ-tRNA). In Nitratidesulfovibrio vulgaris (strain ATCC 29579 / DSM 644 / CCUG 34227 / NCIMB 8303 / VKM B-1760 / Hildenborough) (Desulfovibrio vulgaris), this protein is S-adenosylmethionine:tRNA ribosyltransferase-isomerase.